An 84-amino-acid chain; its full sequence is U4-theraphotoxin-Hhn1a (84 aa).

The first 22 residues, 1-22 (MKVTLIAIPTCAAVLVLHTTAA), serve as a signal peptide directing secretion. The propeptide occupies 23-47 (EELEESQLMEVGMPDTELAAVDEER). 3 cysteine pairs are disulfide-bonded: cysteine 51/cysteine 65, cysteine 55/cysteine 76, and cysteine 70/cysteine 81.

It belongs to the neurotoxin 12 (Hwtx-2) family. 02 (Hwtx-2) subfamily. Expressed by the venom gland.

Its subcellular location is the secreted. In terms of biological role, postsynaptic neurotoxin. The polypeptide is U4-theraphotoxin-Hhn1a (Cyriopagopus hainanus (Chinese bird spider)).